A 789-amino-acid polypeptide reads, in one-letter code: Bifunctional purine biosynthetic protein PUR2,5 (789 aa).

Residues methionine 1–phenylalanine 428 are GARS. The 208-residue stretch at lysine 114–glutamate 321 folds into the ATP-grasp domain. Isoleucine 140–serine 201 is a binding site for ATP. Residues glutamate 291 and asparagine 293 each contribute to the Mg(2+) site. Residues leucine 438–glutamate 773 are AIRS.

This sequence in the N-terminal section; belongs to the GARS family. In the C-terminal section; belongs to the AIR synthase family. The cofactor is Mg(2+). It depends on Mn(2+) as a cofactor.

The protein localises to the cytoplasm. It localises to the cytosol. The enzyme catalyses 2-formamido-N(1)-(5-O-phospho-beta-D-ribosyl)acetamidine + ATP = 5-amino-1-(5-phospho-beta-D-ribosyl)imidazole + ADP + phosphate + H(+). It catalyses the reaction 5-phospho-beta-D-ribosylamine + glycine + ATP = N(1)-(5-phospho-beta-D-ribosyl)glycinamide + ADP + phosphate + H(+). It functions in the pathway purine metabolism; IMP biosynthesis via de novo pathway; 5-amino-1-(5-phospho-D-ribosyl)imidazole from N(2)-formyl-N(1)-(5-phospho-D-ribosyl)glycinamide: step 2/2. Its pathway is purine metabolism; IMP biosynthesis via de novo pathway; N(1)-(5-phospho-D-ribosyl)glycinamide from 5-phospho-alpha-D-ribose 1-diphosphate: step 2/2. Functionally, catalyzes the second and fifth step in the 'de novo' purine biosynthesis pathway; contains phosphoribosylamine--glycine ligase (GARS) and phosphoribosylformylglycinamidine cyclo-ligase (AIRS) activities. The polypeptide is Bifunctional purine biosynthetic protein PUR2,5 (Pichia angusta (Yeast)).